The sequence spans 476 residues: Bifunctional protein HldE (476 aa).

Residues 1-318 (MKVTLPEFER…ENAVRGRADT (318 aa)) are ribokinase. 195 to 198 (NLSE) is an ATP binding site. Asp-264 is an active-site residue. Residues 344–476 (MTNGVFDILH…IIKKIQKDSQ (133 aa)) form a cytidylyltransferase region.

In the N-terminal section; belongs to the carbohydrate kinase PfkB family. This sequence in the C-terminal section; belongs to the cytidylyltransferase family. As to quaternary structure, homodimer.

It catalyses the reaction D-glycero-beta-D-manno-heptose 7-phosphate + ATP = D-glycero-beta-D-manno-heptose 1,7-bisphosphate + ADP + H(+). The enzyme catalyses D-glycero-beta-D-manno-heptose 1-phosphate + ATP + H(+) = ADP-D-glycero-beta-D-manno-heptose + diphosphate. The protein operates within nucleotide-sugar biosynthesis; ADP-L-glycero-beta-D-manno-heptose biosynthesis; ADP-L-glycero-beta-D-manno-heptose from D-glycero-beta-D-manno-heptose 7-phosphate: step 1/4. Its pathway is nucleotide-sugar biosynthesis; ADP-L-glycero-beta-D-manno-heptose biosynthesis; ADP-L-glycero-beta-D-manno-heptose from D-glycero-beta-D-manno-heptose 7-phosphate: step 3/4. Functionally, catalyzes the phosphorylation of D-glycero-D-manno-heptose 7-phosphate at the C-1 position to selectively form D-glycero-beta-D-manno-heptose-1,7-bisphosphate. Its function is as follows. Catalyzes the ADP transfer from ATP to D-glycero-beta-D-manno-heptose 1-phosphate, yielding ADP-D-glycero-beta-D-manno-heptose. The chain is Bifunctional protein HldE from Enterobacter sp. (strain 638).